We begin with the raw amino-acid sequence, 581 residues long: FAD-dependent monooxygenase DEP4 (581 aa).

43 to 46 (VWSK) serves as a coordination point for FAD. Position 54–56 (54–56 (FAQ)) interacts with NADP(+). Val108 lines the FAD pocket. NADP(+) is bound by residues 183–202 (VGRS…EGKR), 219–220 (AP), and 351–352 (DI). Residue Met470 participates in FAD binding.

This sequence belongs to the FAD-binding monooxygenase family. It depends on FAD as a cofactor.

It participates in polyketide biosynthesis. Its function is as follows. FAD-dependent monooxygenase; part of the gene cluster that mediates the biosynthesis of depudecin, a highly oxidized eleven-carbon linear polyketide that acts as a histone deacetylase (HDAC) inhibitor and makes a small contribution to pathogenesis. The reducing polyketide synthase DEP5 is the central enzyme in depudecin biosynthesis by yielding the backbone polyketide chain. The monooxygenases DEP2 and DEP4, as well as the uncharacterized protein DEP1, then act as tailoring enzymes to modify the intermediate polyketide chain into depudecin. The polypeptide is FAD-dependent monooxygenase DEP4 (Alternaria brassicicola (Dark leaf spot agent)).